A 158-amino-acid chain; its full sequence is NAD(P)H-quinone oxidoreductase subunit J, chloroplastic (158 aa).

Belongs to the complex I 30 kDa subunit family. In terms of assembly, NDH is composed of at least 16 different subunits, 5 of which are encoded in the nucleus.

The protein resides in the plastid. It is found in the chloroplast thylakoid membrane. It catalyses the reaction a plastoquinone + NADH + (n+1) H(+)(in) = a plastoquinol + NAD(+) + n H(+)(out). The enzyme catalyses a plastoquinone + NADPH + (n+1) H(+)(in) = a plastoquinol + NADP(+) + n H(+)(out). Functionally, NDH shuttles electrons from NAD(P)H:plastoquinone, via FMN and iron-sulfur (Fe-S) centers, to quinones in the photosynthetic chain and possibly in a chloroplast respiratory chain. The immediate electron acceptor for the enzyme in this species is believed to be plastoquinone. Couples the redox reaction to proton translocation, and thus conserves the redox energy in a proton gradient. This Capsella bursa-pastoris (Shepherd's purse) protein is NAD(P)H-quinone oxidoreductase subunit J, chloroplastic.